The sequence spans 949 residues: Protocadherin alpha-11 (949 aa).

Residues 1 to 29 (MFGFQRRGLGTPRLQLWLLLLEFWEVGSG) form the signal peptide. 6 Cadherin domains span residues 30 to 133 (QLHY…PPVF), 157 to 242 (ASDA…DPDF), 243 to 349 (DKSE…SPEV), 350 to 454 (AVTS…APAF), 455 to 564 (AQPE…APAL), and 580 to 677 (VPRS…APKA). At 30–696 (QLHYSVSEEA…SPEAALVDVN (667 aa)) the chain is on the extracellular side. N-linked (GlcNAc...) asparagine glycosylation is found at asparagine 265 and asparagine 304. N-linked (GlcNAc...) asparagine glycosylation occurs at asparagine 547. Residues 697–717 (VYLIIAICVVSSLLVLTLLLY) form a helical membrane-spanning segment. Residues 718–949 (TALWCSATPT…GNSTTDNSDQ (232 aa)) lie on the Cytoplasmic side of the membrane. PXXP repeat units follow at residues 733 to 736 (PGKP) and 773 to 776 (PSLP). The segment at 733–893 (PGKPTLVCSR…PDKFIIPGSP (161 aa)) is 6 X 4 AA repeats of P-X-X-P. 3 disordered regions span residues 753-807 (RRQR…DWRY), 826-858 (ILRA…PPVG), and 870-889 (YGPG…KFII). Positions 780–789 (NKEEEGERQE) are enriched in basic and acidic residues. PXXP repeat units lie at residues 795–798 (PGQP), 831–834 (PGGP), 872–875 (PGNP), and 890–893 (PGSP). Residues 900–949 (QEPANSQIDKSDFITFGKKEETKKKKKKKKGNKTQEKKEKGNSTTDNSDQ) are disordered. The span at 908-922 (DKSDFITFGKKEETK) shows a compositional bias: basic and acidic residues.

It is found in the cell membrane. Potential calcium-dependent cell-adhesion protein. May be involved in the establishment and maintenance of specific neuronal connections in the brain. This is Protocadherin alpha-11 (PCDHA11) from Pan troglodytes (Chimpanzee).